The chain runs to 339 residues: DNA-directed RNA polymerase subunit alpha (339 aa).

Residues methionine 1 to glutamate 233 form an alpha N-terminal domain (alpha-NTD) region. The alpha C-terminal domain (alpha-CTD) stretch occupies residues lysine 264–phenylalanine 339.

Belongs to the RNA polymerase alpha chain family. As to quaternary structure, in plastids the minimal PEP RNA polymerase catalytic core is composed of four subunits: alpha, beta, beta', and beta''. When a (nuclear-encoded) sigma factor is associated with the core the holoenzyme is formed, which can initiate transcription.

It is found in the plastid. The protein localises to the chloroplast. The enzyme catalyses RNA(n) + a ribonucleoside 5'-triphosphate = RNA(n+1) + diphosphate. Functionally, DNA-dependent RNA polymerase catalyzes the transcription of DNA into RNA using the four ribonucleoside triphosphates as substrates. The sequence is that of DNA-directed RNA polymerase subunit alpha from Thinopyrum elongatum (Tall wheatgrass).